Consider the following 514-residue polypeptide: MTKKIYIFDTTLRDGEQTPKVSLNINDKITIAKQLQKLSVDVIEAGFPKASHGDFEAVKAIAESIQGPVIVGLARASKEDIDCAWEALKGSLKPRIHIFLATSDIHMEHKLKMKPEEVLKRAADMVRYAKGLCPSIEFSPEDATRTRPEFLYKVLEAVIEAGADVVNIPDTVGYTTPVEYGAFIRGIKENVKNIEDAIISVHCHNDLGLAVANSLAAIESGAEQVECAINGLGERAGNAALEEIVMAISTRADSFNCHTDIVTEEITKTSSIVSHVTGMQVQGNKAIVGANAFAHESGIHQHGVLNCRETYEIMTPESVGLKKNFIVLGKHSGRHAFVEHLHEMGYKDLSVEKTDEIFKKFKELADKKKHISDEDIESLVKNEIFHVPEVFKLKYYQVFTGNTVVSTSTVEIECNGKKLSEASCGDGPVDATFKAIEKATGIDVTLNDYFIKAVGSGKDAMGEVTVRIEKEGKIFSAKGISTDIVEASGIAFINAVNKLYYETYSKDLQKISAN.

Residues 5 to 267 form the Pyruvate carboxyltransferase domain; it reads IYIFDTTLRD…HTDIVTEEIT (263 aa). 4 residues coordinate Mn(2+): D14, H202, H204, and N238. The segment at 392 to 514 is regulatory domain; the sequence is KLKYYQVFTG…SKDLQKISAN (123 aa).

The protein belongs to the alpha-IPM synthase/homocitrate synthase family. LeuA type 1 subfamily. In terms of assembly, homodimer. Requires Mn(2+) as cofactor.

The protein resides in the cytoplasm. The catalysed reaction is 3-methyl-2-oxobutanoate + acetyl-CoA + H2O = (2S)-2-isopropylmalate + CoA + H(+). Its pathway is amino-acid biosynthesis; L-leucine biosynthesis; L-leucine from 3-methyl-2-oxobutanoate: step 1/4. Functionally, catalyzes the condensation of the acetyl group of acetyl-CoA with 3-methyl-2-oxobutanoate (2-ketoisovalerate) to form 3-carboxy-3-hydroxy-4-methylpentanoate (2-isopropylmalate). This Clostridium kluyveri (strain NBRC 12016) protein is 2-isopropylmalate synthase.